A 94-amino-acid chain; its full sequence is Large ribosomal subunit protein bL27 (94 aa).

Positions 1 to 9 (MTLNNLQLF) are excised as a propeptide. Positions 9–33 (FAHKKGGGSTSNGRDSQAKRLGAKA) are disordered.

It belongs to the bacterial ribosomal protein bL27 family. Post-translationally, the N-terminus is cleaved by ribosomal processing cysteine protease Prp.

In Streptococcus pneumoniae serotype 4 (strain ATCC BAA-334 / TIGR4), this protein is Large ribosomal subunit protein bL27.